A 333-amino-acid polypeptide reads, in one-letter code: Serine/threonine-protein phosphatase 4 catalytic subunit 1 (333 aa).

A disordered region spans residues 1-29 (MALAVADTQNETFARSESPTSGPSDQLST). Residues 7–27 (DTQNETFARSESPTSGPSDQL) are compositionally biased toward polar residues. Residues aspartate 79, histidine 81, aspartate 107, and asparagine 139 each contribute to the Mn(2+) site. The Proton donor role is filled by histidine 140. Histidine 189 and histidine 264 together coordinate Mn(2+). Leucine 333 is subject to Leucine methyl ester.

Belongs to the PPP phosphatase family. PP-4 (PP-X) subfamily. In terms of assembly, serine/threonine-protein phosphatase 4 (PP4) occurs in different assemblies of the catalytic and one or more regulatory subunits. The regulatory subunits are likely to be ppfr-1, ppfr-2, ppfr-4 and smk-1. Interacts with mei-1. Mn(2+) serves as cofactor. Post-translationally, methylation at the C-terminal Leu-333 is critical for interactions with regulatory subunits.

Its subcellular location is the cytoplasm. It localises to the cytoskeleton. It is found in the microtubule organizing center. The protein localises to the centrosome. It carries out the reaction O-phospho-L-seryl-[protein] + H2O = L-seryl-[protein] + phosphate. The enzyme catalyses O-phospho-L-threonyl-[protein] + H2O = L-threonyl-[protein] + phosphate. Functionally, protein phosphatase which plays an essential role in meiosis and in early embryonic mitosis. During spermatocyte meiosis and the first embryonic mitosis, regulates centrosome maturation, and thus spindle formation, by recruiting some of the components of the pericentriolar material (PCM). During oocyte meiosis I, regulates meiotic chromosome dynamics including synapsis-independent chromosome pairing, restriction of synapsis to homologous chromosomes, programmed DNA double-strand break initiation and crossover formation resulting in chiasma formation. During oocyte meiosis II and probably together with regulatory subunit ppfr-1, may regulate microtubule severing by dephosphorylating and activating mei-1, a component of the katanin microtubule severing complex. The sequence is that of Serine/threonine-protein phosphatase 4 catalytic subunit 1 (pph-4.1) from Caenorhabditis briggsae.